The chain runs to 432 residues: 3-oxo-tetronate kinase (432 aa).

ATP contacts are provided by residues histidine 155, serine 272, alanine 324, glycine 344, glutamate 348, 370–373 (GGET), and glycine 414.

It belongs to the four-carbon acid sugar kinase family.

It catalyses the reaction 3-dehydro-L-erythronate + ATP = 3-dehydro-4-O-phospho-L-erythronate + ADP + H(+). The catalysed reaction is 3-dehydro-D-erythronate + ATP = 3-dehydro-4-O-phospho-D-erythronate + ADP + H(+). In terms of biological role, catalyzes the ATP-dependent phosphorylation of 3-oxo-tetronate to 3-oxo-tetronate 4-phosphate. In Cupriavidus necator (strain ATCC 17699 / DSM 428 / KCTC 22496 / NCIMB 10442 / H16 / Stanier 337) (Ralstonia eutropha), this protein is 3-oxo-tetronate kinase.